Reading from the N-terminus, the 248-residue chain is UPF0736 protein ABC2536 (248 aa).

The protein belongs to the UPF0736 family.

The protein is UPF0736 protein ABC2536 of Shouchella clausii (strain KSM-K16) (Alkalihalobacillus clausii).